A 250-amino-acid chain; its full sequence is Ubiquinone/menaquinone biosynthesis C-methyltransferase UbiE (250 aa).

S-adenosyl-L-methionine-binding positions include T74, D94, D122–A123, and S139.

The protein belongs to the class I-like SAM-binding methyltransferase superfamily. MenG/UbiE family.

The enzyme catalyses a 2-demethylmenaquinol + S-adenosyl-L-methionine = a menaquinol + S-adenosyl-L-homocysteine + H(+). It carries out the reaction a 2-methoxy-6-(all-trans-polyprenyl)benzene-1,4-diol + S-adenosyl-L-methionine = a 5-methoxy-2-methyl-3-(all-trans-polyprenyl)benzene-1,4-diol + S-adenosyl-L-homocysteine + H(+). It participates in quinol/quinone metabolism; menaquinone biosynthesis; menaquinol from 1,4-dihydroxy-2-naphthoate: step 2/2. It functions in the pathway cofactor biosynthesis; ubiquinone biosynthesis. Methyltransferase required for the conversion of demethylmenaquinol (DMKH2) to menaquinol (MKH2) and the conversion of 2-polyprenyl-6-methoxy-1,4-benzoquinol (DDMQH2) to 2-polyprenyl-3-methyl-6-methoxy-1,4-benzoquinol (DMQH2). This chain is Ubiquinone/menaquinone biosynthesis C-methyltransferase UbiE, found in Roseobacter denitrificans (strain ATCC 33942 / OCh 114) (Erythrobacter sp. (strain OCh 114)).